A 331-amino-acid chain; its full sequence is Quinone oxidoreductase (331 aa).

An N-acetylalanine modification is found at Ala2. An N6-acetyllysine modification is found at Lys23. A Phosphoserine modification is found at Ser35. Residues Tyr53, 158–161 (SGGV), and Gly181 contribute to the NADP(+) site. An N6-acetyllysine modification is found at Lys186. NADP(+)-binding positions include His200, Asn231, 248-251 (VGCR), and 271-273 (VSL). Position 298 is an N6-succinyllysine (Lys298).

The protein belongs to the zinc-containing alcohol dehydrogenase family. Quinone oxidoreductase subfamily. As to quaternary structure, homotetramer.

The protein resides in the cytoplasm. The catalysed reaction is 2 a quinone + NADPH + H(+) = 2 a 1,4-benzosemiquinone + NADP(+). In terms of biological role, does not have alcohol dehydrogenase activity. Binds NADP and acts through a one-electron transfer process. Orthoquinones, such as 1,2-naphthoquinone or 9,10-phenanthrenequinone, are the best substrates (in vitro). May act in the detoxification of xenobiotics. Interacts with (AU)-rich elements (ARE) in the 3'-UTR of target mRNA species and enhances their stability. NADPH binding interferes with mRNA binding. The chain is Quinone oxidoreductase (Cryz) from Mus musculus (Mouse).